A 180-amino-acid polypeptide reads, in one-letter code: Protein GrpE (180 aa).

Residues 1 to 25 (MSKKKAEDKQPIIKDEAVEEPKSDS) form a disordered region.

The protein belongs to the GrpE family. In terms of assembly, homodimer.

It is found in the cytoplasm. Participates actively in the response to hyperosmotic and heat shock by preventing the aggregation of stress-denatured proteins, in association with DnaK and GrpE. It is the nucleotide exchange factor for DnaK and may function as a thermosensor. Unfolded proteins bind initially to DnaJ; upon interaction with the DnaJ-bound protein, DnaK hydrolyzes its bound ATP, resulting in the formation of a stable complex. GrpE releases ADP from DnaK; ATP binding to DnaK triggers the release of the substrate protein, thus completing the reaction cycle. Several rounds of ATP-dependent interactions between DnaJ, DnaK and GrpE are required for fully efficient folding. The chain is Protein GrpE from Fructilactobacillus sanfranciscensis (Lactobacillus sanfranciscensis).